The following is a 390-amino-acid chain: Queuine tRNA-ribosyltransferase (390 aa).

Residue D92 is the Proton acceptor of the active site. Substrate contacts are provided by residues 92–96, D146, Q195, and G222; that span reads DSGGF. An RNA binding region spans residues 253–259; it reads GVGTPED. Catalysis depends on D272, which acts as the Nucleophile. Positions 277–281 are RNA binding; important for wobble base 34 recognition; it reads TRNAR. Zn(2+)-binding residues include C310, C312, C315, and H354.

The protein belongs to the queuine tRNA-ribosyltransferase family. In terms of assembly, homodimer. Within each dimer, one monomer is responsible for RNA recognition and catalysis, while the other monomer binds to the replacement base PreQ1. The cofactor is Zn(2+).

It carries out the reaction 7-aminomethyl-7-carbaguanine + guanosine(34) in tRNA = 7-aminomethyl-7-carbaguanosine(34) in tRNA + guanine. It functions in the pathway tRNA modification; tRNA-queuosine biosynthesis. In terms of biological role, catalyzes the base-exchange of a guanine (G) residue with the queuine precursor 7-aminomethyl-7-deazaguanine (PreQ1) at position 34 (anticodon wobble position) in tRNAs with GU(N) anticodons (tRNA-Asp, -Asn, -His and -Tyr). Catalysis occurs through a double-displacement mechanism. The nucleophile active site attacks the C1' of nucleotide 34 to detach the guanine base from the RNA, forming a covalent enzyme-RNA intermediate. The proton acceptor active site deprotonates the incoming PreQ1, allowing a nucleophilic attack on the C1' of the ribose to form the product. After dissociation, two additional enzymatic reactions on the tRNA convert PreQ1 to queuine (Q), resulting in the hypermodified nucleoside queuosine (7-(((4,5-cis-dihydroxy-2-cyclopenten-1-yl)amino)methyl)-7-deazaguanosine). This Verminephrobacter eiseniae (strain EF01-2) protein is Queuine tRNA-ribosyltransferase.